Reading from the N-terminus, the 51-residue chain is Large ribosomal subunit protein eL39 (51 aa).

It belongs to the eukaryotic ribosomal protein eL39 family.

This is Large ribosomal subunit protein eL39 (rpl39e) from Aeropyrum pernix (strain ATCC 700893 / DSM 11879 / JCM 9820 / NBRC 100138 / K1).